The primary structure comprises 434 residues: MMHSAKNVCRTCMDETGTLVDIFANVRDPVLDEPEMSLSHILARCTERPVKRGDLLPQFICVSCVLAVQNAFRFKWQSEQSYQHFFRVLNQSGAPENQVHLAACNGDKNQIINQKMQLKSDRQQDTQQMTKTQKPDDDLSQKQTLQAKLQEGNIDGPPESFTLHPRKRTCRTEEQADMIPKEATRSTKMICDADGYYNCPHCSKRFCSQTQLRTHITDLCNRCPYCPRTYMQKSNLKRHLRNHLSKPAHKCFHCSKAFMRKDHLKRHLRTHDSDGPLSCSQCSAVFIEHVQLEIHRREHKQRPGSSKSESTKDPDSDDSDQAQDLKPKWTKNTFNGTCSIPPMLKPKPICDICQKKFSSVYALKRHMLTHNRQHHLKKCTYCSEEFKTEKHLKRHERGHMGDLFRCEFCSLVFVDVNYLRKHKKRIHSNNVIAM.

One can recognise a ZAD domain in the interval 7–88; that stretch reads NVCRTCMDET…EQSYQHFFRV (82 aa). Cys9, Cys12, Cys61, and Cys64 together coordinate Zn(2+). A disordered region spans residues 117 to 173; sequence QLKSDRQQDTQQMTKTQKPDDDLSQKQTLQAKLQEGNIDGPPESFTLHPRKRTCRTE. The segment at 197–219 adopts a C2H2-type 1; degenerate zinc-finger fold; sequence YNCPHCSKRFCSQTQLRTHITDL. C2H2-type zinc fingers lie at residues 221–243, 249–271, and 277–299; these read NRCPYCPRTYMQKSNLKRHLRNH, HKCFHCSKAFMRKDHLKRHLRTH, and LSCSQCSAVFIEHVQLEIHRREH. Positions 295 to 328 are disordered; that stretch reads HRREHKQRPGSSKSESTKDPDSDDSDQAQDLKPK. Ser316 and Ser319 each carry phosphoserine. C2H2-type zinc fingers lie at residues 348–370, 377–399, and 404–427; these read PICDICQKKFSSVYALKRHMLTH, KKCTYCSEEFKTEKHLKRHERGH, and FRCEFCSLVFVDVNYLRKHKKRIH.

Homodimer; mediated by the ZAD domain. Interacts (via C2H2 type zinc finger 4) with rhi/rhino (via Chromo domain). Dimerization is required for association with DNA and interaction with rhi/rhino. In terms of tissue distribution, primarily expressed in ovaries and absent from testes. In ovaries very low levels in germline stem cells and cystoblasts but abundant in developing cysts and polyploid nurse cells.

It is found in the nucleus. The protein localises to the chromosome. Functionally, DNA-binding zinc finger protein that recruits chromo domain protein rhino/rhi to specific chromatin regions enriched in H3K9me2/3 histone methylation, mediating piRNA (piwi-interacting RNA) biogenesis. May bind to GC rich DNA sequences including a 5'-GRGGN-3' sequence motif. Nucleates rhi/rhino accumulation and stabilizes its expansion. Involved in piRNA transposon repression, particularly in the female ovary during oogenesis. The protein is Zinc finger protein kipf of Drosophila melanogaster (Fruit fly).